Reading from the N-terminus, the 726-residue chain is Tripartite terminase subunit 1 (726 aa).

A C3H1-type zinc finger spans residues 189–217 (CMKCYEELTLTPNQGKSLRKRLHGKFCNH). 626 to 633 (YNDVFGKR) contributes to the ATP binding site.

The protein belongs to the herpesviridae TRM1 protein family. Associates with TRM2 and TRM3 to form the tripartite terminase complex. Interacts with portal protein.

It is found in the host nucleus. In terms of biological role, component of the molecular motor that translocates viral genomic DNA in empty capsid during DNA packaging. Forms a tripartite terminase complex together with TRM2 and TRM3 in the host cytoplasm. Once the complex reaches the host nucleus, it interacts with the capsid portal vertex. This portal forms a ring in which genomic DNA is translocated into the capsid. TRM1 carries an endonuclease activity that plays an important role for the cleavage of concatemeric viral DNA into unit length genomes. This chain is Tripartite terminase subunit 1, found in Human herpesvirus 6B (strain Z29) (HHV-6 variant B).